The sequence spans 174 residues: Shikimate kinase 2 (174 aa).

Residue 12–17 (GCGKTT) participates in ATP binding. Residues Thr16 and Asp32 each contribute to the Mg(2+) site. 3 residues coordinate substrate: Asp34, Arg58, and Gly79. The interval 112 to 126 (QAAPEEDLRPTLTGK) is LID domain. Residue Arg120 participates in ATP binding. Arg139 provides a ligand contact to substrate.

The protein belongs to the shikimate kinase family. AroL subfamily. As to quaternary structure, monomer. Requires Mg(2+) as cofactor.

It localises to the cytoplasm. The enzyme catalyses shikimate + ATP = 3-phosphoshikimate + ADP + H(+). It participates in metabolic intermediate biosynthesis; chorismate biosynthesis; chorismate from D-erythrose 4-phosphate and phosphoenolpyruvate: step 5/7. In terms of biological role, catalyzes the specific phosphorylation of the 3-hydroxyl group of shikimic acid using ATP as a cosubstrate. This is Shikimate kinase 2 from Shigella dysenteriae serotype 1 (strain Sd197).